Reading from the N-terminus, the 453-residue chain is Na(+)/H(+) antiporter NhaA 2 (453 aa).

12 helical membrane-spanning segments follow: residues 23 to 43 (FLHI…AALI), 74 to 94 (LHFW…GMEI), 111 to 131 (LPMA…LSFG), 139 to 159 (GWAV…ALLG), 168 to 188 (VFLL…IAFF), 191 to 211 (GGLD…VIGL), 214 to 234 (IGVG…LGIL), 235 to 255 (LTGA…PVTA), 316 to 336 (VAFG…LSGV), 345 to 365 (WVMI…IVSV), 386 to 406 (IVLV…IANL), and 419 to 439 (LGVL…GVWS).

This sequence belongs to the NhaA Na(+)/H(+) (TC 2.A.33) antiporter family.

Its subcellular location is the cell inner membrane. It catalyses the reaction Na(+)(in) + 2 H(+)(out) = Na(+)(out) + 2 H(+)(in). Functionally, na(+)/H(+) antiporter that extrudes sodium in exchange for external protons. This is Na(+)/H(+) antiporter NhaA 2 from Pseudomonas putida (strain ATCC 700007 / DSM 6899 / JCM 31910 / BCRC 17059 / LMG 24140 / F1).